A 77-amino-acid chain; its full sequence is Translation initiation factor IF-1, chloroplastic (77 aa).

Residues 1–71 (MKRQKWIHEG…TRGRIIYRLR (71 aa)) enclose the S1-like domain.

It belongs to the IF-1 family. In terms of assembly, component of the 30S ribosomal translation pre-initiation complex which assembles on the 30S ribosome in the order IF-2 and IF-3, IF-1 and N-formylmethionyl-tRNA(fMet); mRNA recruitment can occur at any time during PIC assembly.

It is found in the plastid. Its subcellular location is the chloroplast. One of the essential components for the initiation of protein synthesis. Stabilizes the binding of IF-2 and IF-3 on the 30S subunit to which N-formylmethionyl-tRNA(fMet) subsequently binds. Helps modulate mRNA selection, yielding the 30S pre-initiation complex (PIC). Upon addition of the 50S ribosomal subunit IF-1, IF-2 and IF-3 are released leaving the mature 70S translation initiation complex. This chain is Translation initiation factor IF-1, chloroplastic, found in Leucophyllum frutescens (Texas ranger).